Reading from the N-terminus, the 114-residue chain is Ribonuclease P protein component (114 aa).

Belongs to the RnpA family. In terms of assembly, consists of a catalytic RNA component (M1 or rnpB) and a protein subunit.

The enzyme catalyses Endonucleolytic cleavage of RNA, removing 5'-extranucleotides from tRNA precursor.. Functionally, RNaseP catalyzes the removal of the 5'-leader sequence from pre-tRNA to produce the mature 5'-terminus. It can also cleave other RNA substrates such as 4.5S RNA. The protein component plays an auxiliary but essential role in vivo by binding to the 5'-leader sequence and broadening the substrate specificity of the ribozyme. In Exiguobacterium sp. (strain ATCC BAA-1283 / AT1b), this protein is Ribonuclease P protein component.